Here is a 53-residue protein sequence, read N- to C-terminus: UPF0391 membrane protein YtjA (53 aa).

2 helical membrane-spanning segments follow: residues 4-24 and 30-48; these read WGIIFLVIALIAAALGFGGLA and AAKIVFVVGIILFLVSLFM.

Belongs to the UPF0391 family.

The protein localises to the cell membrane. The sequence is that of UPF0391 membrane protein YtjA from Escherichia coli O6:K15:H31 (strain 536 / UPEC).